Consider the following 413-residue polypeptide: uncharacterized protein (413 aa).

Positions R2–E129 constitute a Response regulatory domain. Position 54 is a 4-aspartylphosphate (D54).

This is an uncharacterized protein from Sinorhizobium fredii (strain NBRC 101917 / NGR234).